Reading from the N-terminus, the 385-residue chain is 5'-AMP-activated protein kinase catalytic subunit alpha-1 (385 aa).

One can recognise a Protein kinase domain in the interval 1-229 (DGRVKIGHYI…IKDIREHEWF (229 aa)). The residue at position 14 (Thr-14) is a Phosphothreonine. Position 15–22 (15–22 (LGVGTFGK)) interacts with ATP. Asp-100 acts as the Proton acceptor in catalysis. At Thr-133 the chain carries Phosphothreonine; by LKB1 and CaMKK2. A phosphothreonine mark is found at Thr-219 and Thr-276. Positions 252–297 (EALKQDPLAVAYHLIIDNRDFYLATSPPDSFLDDHHLTRVPFLVAE) are AIS. Ser-277 is modified (phosphoserine). Ser-281 is subject to Phosphoserine; by ULK1. Thr-289 is modified (phosphothreonine; by ULK1). Thr-298 carries the post-translational modification Phosphothreonine. Ser-353 and Ser-383 each carry phosphoserine.

Belongs to the protein kinase superfamily. CAMK Ser/Thr protein kinase family. SNF1 subfamily. AMPK is a heterotrimer of an alpha catalytic subunit (PRKAA1 or PRKAA2), a beta (PRKAB1 or PRKAB2) and a gamma non-catalytic subunits (PRKAG1, PRKAG2 or PRKAG3). Interacts with FNIP1 and FNIP2. Requires Mg(2+) as cofactor. Post-translationally, ubiquitinated. Phosphorylated at Thr-133 by STK11/LKB1 in complex with STE20-related adapter-alpha (STRADA) pseudo kinase and CAB39. Also phosphorylated at Thr-133 by CAMKK2; triggered by a rise in intracellular calcium ions, without detectable changes in the AMP/ATP ratio. CAMKK1 can also phosphorylate Thr-133, but at a much lower level. Dephosphorylated by protein phosphatase 2A and 2C (PP2A and PP2C). Phosphorylated by ULK1 and ULK2; leading to negatively regulate AMPK activity and suggesting the existence of a regulatory feedback loop between ULK1, ULK2 and AMPK. Dephosphorylated by PPM1A and PPM1B. In terms of processing, glycosylated; O-GlcNAcylated by OGT, promoting the AMP-activated protein kinase (AMPK) activity.

The protein localises to the cytoplasm. It is found in the nucleus. It carries out the reaction L-seryl-[protein] + ATP = O-phospho-L-seryl-[protein] + ADP + H(+). The catalysed reaction is L-threonyl-[protein] + ATP = O-phospho-L-threonyl-[protein] + ADP + H(+). The enzyme catalyses L-seryl-[acetyl-CoA carboxylase] + ATP = O-phospho-L-seryl-[acetyl-CoA carboxylase] + ADP + H(+). It catalyses the reaction L-seryl-[3-hydroxy-3-methylglutaryl-coenzyme A reductase] + ATP = O-phospho-L-seryl-[3-hydroxy-3-methylglutaryl-coenzyme A reductase] + ADP + H(+). It carries out the reaction L-seryl-[tau protein] + ATP = O-phospho-L-seryl-[tau protein] + ADP + H(+). The catalysed reaction is L-threonyl-[tau protein] + ATP = O-phospho-L-threonyl-[tau protein] + ADP + H(+). Its activity is regulated as follows. Activated by phosphorylation on Thr-133. Binding of AMP to non-catalytic gamma subunit (PRKAG1, PRKAG2 or PRKAG3) results in allosteric activation, inducing phosphorylation on Thr-133. AMP-binding to gamma subunit also sustains activity by preventing dephosphorylation of Thr-133. ADP also stimulates Thr-133 phosphorylation, without stimulating already phosphorylated AMPK. ATP promotes dephosphorylation of Thr-133, rendering the enzyme inactive. Under physiological conditions AMPK mainly exists in its inactive form in complex with ATP, which is much more abundant than AMP. Selectively inhibited by compound C (6-[4-(2-Piperidin-1-yl-ethoxy)-phenyl)]-3-pyridin-4-yl-pyyrazolo[1,5-a] pyrimidine. Activated by resveratrol, a natural polyphenol present in red wine, and S17834, a synthetic polyphenol. Functionally, catalytic subunit of AMP-activated protein kinase (AMPK), an energy sensor protein kinase that plays a key role in regulating cellular energy metabolism. In response to reduction of intracellular ATP levels, AMPK activates energy-producing pathways and inhibits energy-consuming processes: inhibits protein, carbohydrate and lipid biosynthesis, as well as cell growth and proliferation. AMPK acts via direct phosphorylation of metabolic enzymes, and by longer-term effects via phosphorylation of transcription regulators. Regulates lipid synthesis by phosphorylating and inactivating lipid metabolic enzymes such as ACACA, ACACB, GYS1, HMGCR and LIPE; regulates fatty acid and cholesterol synthesis by phosphorylating acetyl-CoA carboxylase (ACACA and ACACB) and hormone-sensitive lipase (LIPE) enzymes, respectively. Promotes lipolysis of lipid droplets by mediating phosphorylation of isoform 1 of CHKA (CHKalpha2). Regulates insulin-signaling and glycolysis by phosphorylating IRS1, PFKFB2 and PFKFB3. AMPK stimulates glucose uptake in muscle by increasing the translocation of the glucose transporter SLC2A4/GLUT4 to the plasma membrane, possibly by mediating phosphorylation of TBC1D4/AS160. Regulates transcription and chromatin structure by phosphorylating transcription regulators involved in energy metabolism such as CRTC2/TORC2, FOXO3, histone H2B, HDAC5, MEF2C, MLXIPL/ChREBP, EP300, HNF4A, p53/TP53, SREBF1, SREBF2 and PPARGC1A. Acts as a key regulator of glucose homeostasis in liver by phosphorylating CRTC2/TORC2, leading to CRTC2/TORC2 sequestration in the cytoplasm. In response to stress, phosphorylates 'Ser-36' of histone H2B (H2BS36ph), leading to promote transcription. Acts as a key regulator of cell growth and proliferation by phosphorylating FNIP1, TSC2, RPTOR, WDR24 and ATG1/ULK1: in response to nutrient limitation, negatively regulates the mTORC1 complex by phosphorylating RPTOR component of the mTORC1 complex and by phosphorylating and activating TSC2. Also phosphorylates and inhibits GATOR2 subunit WDR24 in response to nutrient limitation, leading to suppress glucose-mediated mTORC1 activation. In response to energetic stress, phosphorylates FNIP1, inactivating the non-canonical mTORC1 signaling, thereby promoting nuclear translocation of TFEB and TFE3, and inducing transcription of lysosomal or autophagy genes. In response to nutrient limitation, promotes autophagy by phosphorylating and activating ATG1/ULK1. In that process also activates WDR45/WIPI4. Phosphorylates CASP6, thereby preventing its autoprocessing and subsequent activation. In response to nutrient limitation, phosphorylates transcription factor FOXO3 promoting FOXO3 mitochondrial import. Also acts as a regulator of cellular polarity by remodeling the actin cytoskeleton; probably by indirectly activating myosin. AMPK also acts as a regulator of circadian rhythm by mediating phosphorylation of CRY1, leading to destabilize it. May regulate the Wnt signaling pathway by phosphorylating CTNNB1, leading to stabilize it. Also has tau-protein kinase activity: in response to amyloid beta A4 protein (APP) exposure, activated by CAMKK2, leading to phosphorylation of MAPT/TAU; however the relevance of such data remains unclear in vivo. Also phosphorylates CFTR, EEF2K, KLC1, NOS3 and SLC12A1. Regulates hepatic lipogenesis. Activated via SIRT3, represses sterol regulatory element-binding protein (SREBP) transcriptional activities and ATP-consuming lipogenesis to restore cellular energy balance. Upon stress, regulates mitochondrial fragmentation through phosphorylation of MTFR1L. In Sus scrofa (Pig), this protein is 5'-AMP-activated protein kinase catalytic subunit alpha-1 (PRKAA1).